The chain runs to 159 residues: U1 small nuclear ribonucleoprotein C (159 aa).

The Matrin-type zinc finger occupies 4–36 (FYCDYCDTYLTHDSPSVRKTHCSGRKHKENVKD). Disordered regions lie at residues 63 to 95 (PPTPFAAPPAGSAMIPPPPSMGGPPRPGMMPAP) and 139 to 159 (MRPPTRPMMLQSRPGMARPDR). The segment covering 77–95 (IPPPPSMGGPPRPGMMPAP) has biased composition (pro residues).

It belongs to the U1 small nuclear ribonucleoprotein C family. In terms of assembly, component of the U1 snRNP. The U1 snRNP is composed of the U1 snRNA and the 7 core Sm proteins snrpb, snrpd1, snrpd2, snrpd3, snrpe, snrpf and snrpg that assemble in a heptameric protein ring on the Sm site of the small nuclear RNA to form the core snRNP, and at least 3 U1 snRNP-specific proteins snrnp70/U1-70K, snrpa/U1-A and snrpc/U1-C. snrpc/U1-C interacts with U1 snRNA and the 5' splice-site region of the pre-mRNA.

The protein localises to the nucleus. Its function is as follows. Component of the spliceosomal U1 snRNP, which is essential for recognition of the pre-mRNA 5' splice-site and the subsequent assembly of the spliceosome. snrpc/U1-C is directly involved in initial 5' splice-site recognition for both constitutive and regulated alternative splicing. The interaction with the 5' splice-site seems to precede base-pairing between the pre-mRNA and the U1 snRNA. Stimulates commitment or early (E) complex formation by stabilizing the base pairing of the 5' end of the U1 snRNA and the 5' splice-site region. The chain is U1 small nuclear ribonucleoprotein C from Xenopus tropicalis (Western clawed frog).